A 293-amino-acid polypeptide reads, in one-letter code: Ribosomal protein L11 methyltransferase (293 aa).

The S-adenosyl-L-methionine site is built by Thr145, Gly166, Asp188, and Asn230.

The protein belongs to the methyltransferase superfamily. PrmA family.

Its subcellular location is the cytoplasm. The catalysed reaction is L-lysyl-[protein] + 3 S-adenosyl-L-methionine = N(6),N(6),N(6)-trimethyl-L-lysyl-[protein] + 3 S-adenosyl-L-homocysteine + 3 H(+). Its function is as follows. Methylates ribosomal protein L11. The chain is Ribosomal protein L11 methyltransferase from Salmonella heidelberg (strain SL476).